The primary structure comprises 449 residues: N-succinylarginine dihydrolase (449 aa).

Substrate contacts are provided by residues 19-28 (GGLSYGNVAS), asparagine 110, and 137-138 (HR). A disordered region spans residues 23–43 (YGNVASQSNSQQGSNPREAAR). A compositionally biased stretch (polar residues) spans 25–37 (NVASQSNSQQGSN). Residue glutamate 174 is part of the active site. Arginine 214 is a binding site for substrate. The active site involves histidine 250. Substrate contacts are provided by aspartate 252 and asparagine 365. The active-site Nucleophile is the cysteine 371.

It belongs to the succinylarginine dihydrolase family. As to quaternary structure, homodimer.

It catalyses the reaction N(2)-succinyl-L-arginine + 2 H2O + 2 H(+) = N(2)-succinyl-L-ornithine + 2 NH4(+) + CO2. It participates in amino-acid degradation; L-arginine degradation via AST pathway; L-glutamate and succinate from L-arginine: step 2/5. Functionally, catalyzes the hydrolysis of N(2)-succinylarginine into N(2)-succinylornithine, ammonia and CO(2). The sequence is that of N-succinylarginine dihydrolase from Pseudomonas putida (strain GB-1).